The primary structure comprises 260 residues: MKFEWLFLTIAPCDAAEPWQLGFQDAATPMMQGIIDLHHDIFFFLILILVFVSRILVRALWHFHYKKNPIPQRIVHGTTIEILRTIFPSIIPMFIAIPSFALLYSMDEVVVDPAITIKAIGHQWYRTYEYSDYNSSDEQSLTFDSYTIPEDDLELGQSRLLEVDNRVVVPAKTHLRIIVTPADVPHSWAVPSLGVKCDAVPGRLNQISISVQREGVYYGQCSEICGTNHAFTPIVVEAVPSKDYGSRVFNQLIPQTTGEA.

Residues 1–39 (MKFEWLFLTIAPCDAAEPWQLGFQDAATPMMQGIIDLHH) lie on the Mitochondrial intermembrane side of the membrane. A helical membrane pass occupies residues 40 to 61 (DIFFFLILILVFVSRILVRALW). Topologically, residues 62–76 (HFHYKKNPIPQRIVH) are mitochondrial matrix. A helical membrane pass occupies residues 77–104 (GTTIEILRTIFPSIIPMFIAIPSFALLY). Over 105 to 260 (SMDEVVVDPA…QLIPQTTGEA (156 aa)) the chain is Mitochondrial intermembrane. Residues histidine 186, cysteine 221, glutamate 223, cysteine 225, and histidine 229 each coordinate Cu cation. Glutamate 223 is a Mg(2+) binding site.

This sequence belongs to the cytochrome c oxidase subunit 2 family. As to quaternary structure, component of the cytochrome c oxidase (complex IV, CIV), a multisubunit enzyme composed of a catalytic core of 3 subunits and several supernumerary subunits. The complex exists as a monomer or a dimer and forms supercomplexes (SCs) in the inner mitochondrial membrane with ubiquinol-cytochrome c oxidoreductase (cytochrome b-c1 complex, complex III, CIII). It depends on Cu cation as a cofactor.

It is found in the mitochondrion inner membrane. The catalysed reaction is 4 Fe(II)-[cytochrome c] + O2 + 8 H(+)(in) = 4 Fe(III)-[cytochrome c] + 2 H2O + 4 H(+)(out). Functionally, component of the cytochrome c oxidase, the last enzyme in the mitochondrial electron transport chain which drives oxidative phosphorylation. The respiratory chain contains 3 multisubunit complexes succinate dehydrogenase (complex II, CII), ubiquinol-cytochrome c oxidoreductase (cytochrome b-c1 complex, complex III, CIII) and cytochrome c oxidase (complex IV, CIV), that cooperate to transfer electrons derived from NADH and succinate to molecular oxygen, creating an electrochemical gradient over the inner membrane that drives transmembrane transport and the ATP synthase. Cytochrome c oxidase is the component of the respiratory chain that catalyzes the reduction of oxygen to water. Electrons originating from reduced cytochrome c in the intermembrane space (IMS) are transferred via the dinuclear copper A center (CU(A)) of subunit 2 and heme A of subunit 1 to the active site in subunit 1, a binuclear center (BNC) formed by heme A3 and copper B (CU(B)). The BNC reduces molecular oxygen to 2 water molecules using 4 electrons from cytochrome c in the IMS and 4 protons from the mitochondrial matrix. The chain is Cytochrome c oxidase subunit 2 (COX2) from Glycine max (Soybean).